The chain runs to 239 residues: Orotidine 5'-phosphate decarboxylase (239 aa).

Substrate-binding positions include aspartate 10, lysine 32, 59 to 68, threonine 122, arginine 184, glutamine 193, glycine 213, and arginine 214; that span reads DLKLHDIPNT. Lysine 61 functions as the Proton donor in the catalytic mechanism.

It belongs to the OMP decarboxylase family. Type 1 subfamily. In terms of assembly, homodimer.

The enzyme catalyses orotidine 5'-phosphate + H(+) = UMP + CO2. It functions in the pathway pyrimidine metabolism; UMP biosynthesis via de novo pathway; UMP from orotate: step 2/2. Catalyzes the decarboxylation of orotidine 5'-monophosphate (OMP) to uridine 5'-monophosphate (UMP). The polypeptide is Orotidine 5'-phosphate decarboxylase (Shouchella clausii (strain KSM-K16) (Alkalihalobacillus clausii)).